Consider the following 202-residue polypeptide: Large ribosomal subunit protein bL25 (202 aa).

Belongs to the bacterial ribosomal protein bL25 family. CTC subfamily. Part of the 50S ribosomal subunit; part of the 5S rRNA/L5/L18/L25 subcomplex. Contacts the 5S rRNA. Binds to the 5S rRNA independently of L5 and L18.

In terms of biological role, this is one of the proteins that binds to the 5S RNA in the ribosome where it forms part of the central protuberance. This chain is Large ribosomal subunit protein bL25, found in Chlorobium luteolum (strain DSM 273 / BCRC 81028 / 2530) (Pelodictyon luteolum).